The primary structure comprises 137 residues: Profilin-3 (137 aa).

Belongs to the profilin family. In terms of assembly, interacts with ACTRT3.

It localises to the cytoplasm. The protein localises to the cytoskeleton. The protein resides in the nucleus. Binds to actin and affects the structure of the cytoskeleton. Binds to poly-L-proline, phosphatidylinositol 3-phosphate (PtdIns(3)P), phosphatidylinositol 4,5-bisphosphate (PtdIns(4,5)P2) and phosphatidylinositol 4-phosphate (PtdIns(4)P). Slightly reduces actin polymerization. May be involved in spermatogenesis. The chain is Profilin-3 (PFN3) from Bos taurus (Bovine).